Consider the following 1055-residue polypeptide: MAAAYLDPNLNHTPSSSTKTHLGTGTERSPGAMERVLKVFHYFESSNEPTTWASIIRHGDATDVRGIIQKIVDSHKVKHVACYGFRLSHLRSEEVHWLHVDMGVSSVREKYELAHPPEEWKYELRIRYLPKGFLNQFTEDKPTLNFFYQQVKSDYMLEIADQVDQDIALKLGCLEIRRSYWEMRGNALEKKSNYEVLEKDVGLKRFFPKSLLDSVKAKTLRKLIQQTFRQFANLNREESILKFFEILSPVYRFDKECFKCALGSSWIISVELAIGPEEGISYLTDKGCNPTHLADFNQVQTIQYSNSEDKDRKGMLQLKIAGAPEPLTVTAPSLTIAENMADLIDGYCRLVNGATQSFIIRPQKEGERALPSIPKLANNEKQGMRTHAVSVSETDDYAEIIDEEDTYTMPSTRDYEIQRERIELGRCIGEGQFGDVHQGVYLSPENPALAVAIKTCKNCTSDSVREKFLQEALTMRQFDHPHIVKLIGVITENPVWIIMELCTLGELRSFLQVRKYSLDLASLILYAYQLSTALAYLESKRFVHRDIAARNVLVSSNDCVKLGDFGLSRYMEDSTYYKASKGKLPIKWMAPESINFRRFTSASDVWMFGVCMWEILMHGVKPFQGVKNNDVIGRIENGERLPMPPNCPPTLYSLMTKCWAYDPSRRPRFTELKAQLSTILEEEKVQQEERMRMESRRQATVSWDSGGSDEAPPKPSRPGYPSPRSSEGFYPSPQHMVQTNHYQISGYPGSHGIPAMAGSIYPGQASLLDQTELWNHRPQEMSMWQPSVEDSAALDLRGMGQVLPPHLMEERLIRQQQEMEEDQRWLEKEERFLKPDVRLSRGSIDREDGSFQGPTGNQHIYQPVGKPDPAAPPKKPPRPGAPGHLSNLSSISSPAESYNEGVKPWRLQPQEISPPPTANLDRSNDKVYENVTGLVKAVIEMSSKIQPAPPEEYVPMVKEVGLALRTLLATVDETIPILPASTHREIEMAQKLLNSDLGELISKMKLAQQYVMTSLQQEYKKQMLTAAHALAVDAKNLLDVIDQARLKMLGQTRPH.

The segment at 1 to 29 is disordered; sequence MAAAYLDPNLNHTPSSSTKTHLGTGTERS. Position 2 is an N-acetylalanine (Ala-2). A Phosphotyrosine modification is found at Tyr-5. Residues 10 to 27 show a composition bias toward polar residues; sequence LNHTPSSSTKTHLGTGTE. Residue Thr-13 is modified to Phosphothreonine. 2 positions are modified to phosphoserine: Ser-29 and Ser-54. The FERM domain maps to 35-355; that stretch reads RVLKVFHYFE…GYCRLVNGAT (321 aa). Lys-152 participates in a covalent cross-link: Glycyl lysine isopeptide (Lys-Gly) (interchain with G-Cter in SUMO). Tyr-397 carries the phosphotyrosine; by autocatalysis modification. A Phosphotyrosine modification is found at Tyr-407. The region spanning 422-680 is the Protein kinase domain; that stretch reads IELGRCIGEG…ELKAQLSTIL (259 aa). ATP contacts are provided by residues 428–434, Lys-454, and 500–502; these read IGEGQFG and ELC. Catalysis depends on Asp-546, which acts as the Proton acceptor. Phosphotyrosine is present on residues Tyr-570 and Tyr-576. Position 577 is a phosphotyrosine; by RET and SRC (Tyr-577). At Ser-580 the chain carries Phosphoserine. Residues 685–697 are compositionally biased toward basic and acidic residues; sequence VQQEERMRMESRR. Disordered regions lie at residues 685-734 and 837-923; these read VQQE…PSPQ and VRLS…LDRS. An interaction with TGFB1I1 region spans residues 707–1055; it reads GSDEAPPKPS…LKMLGQTRPH (349 aa). Ser-722 carries the phosphoserine modification. At Ser-732 the chain carries Phosphoserine; by CDK5. The span at 837 to 849 shows a compositional bias: basic and acidic residues; that stretch reads VRLSRGSIDREDG. Ser-843 carries the phosphoserine modification. The residue at position 861 (Tyr-861) is a Phosphotyrosine. Over residues 869–880 the composition is skewed to pro residues; the sequence is PAAPPKKPPRPG. The segment covering 886–896 has biased composition (polar residues); the sequence is SNLSSISSPAE. Position 913 is a phosphoserine (Ser-913). The interaction with ARHGEF28 stretch occupies residues 915-1055; it reads PPTANLDRSN…LKMLGQTRPH (141 aa). Phosphothreonine is present on Thr-917. Tyr-928 carries the phosphotyrosine modification.

Belongs to the protein kinase superfamily. Tyr protein kinase family. FAK subfamily. Interacts with GIT1. Component of a complex that contains at least FER, CTTN and PTK2/FAK1. Interacts with BMX. Interacts with STEAP4. Interacts with ZFYVE21. Interacts with ESR1. Interacts with PIK3R1 or PIK3R2. Interacts with FGR, FLT4 and RET. Interacts with EPHA2 in resting cells; activation of EPHA2 recruits PTPN11, leading to dephosphorylation of PTK2/FAK1 and dissociation of the complex. Interacts with EPHA1 (kinase activity-dependent). Interacts with P53/TP53. Interacts (via first Pro-rich region) with CAS family members (via SH3 domain), including BCAR1, BCAR3, and CASS4. Interacts with NEDD9 (via SH3 domain). Interacts with TGFB1I1. Interacts with SRC, GRB2 and GRB7. Interacts with ARHGEF28. Interacts with SHB. Part of a complex composed of THSD1, PTK2/FAK1, TLN1 and VCL. Interacts with PXN and TLN1. Interacts with SORBS1. Interacts with STAT1. Interacts with WASL. Interacts with ARHGAP26 and SHC1. Interacts with RB1CC1; this inhibits PTK2/FAK1 activity and activation of downstream signaling pathways. Interacts with ARHGEF7. Interacts with MDM2. Interacts with PIAS1. Interacts with DCC. Interacts with LPXN (via LD motif 3). Interacts with MISP. Interacts with EMP2; regulates PTK2 activation and localization. Interacts with DSCAM. Interacts with AMBRA1. Interacts (when tyrosine-phosphorylated) with tensin TNS1; the interaction is increased by phosphorylation of TNS1. Post-translationally, phosphorylated on tyrosine residues upon activation, e.g. upon integrin signaling. Tyr-397 is the major autophosphorylation site, but other kinases can also phosphorylate this residue. Phosphorylation at Tyr-397 promotes interaction with SRC and SRC family members, leading to phosphorylation at Tyr-576, Tyr-577 and at additional tyrosine residues. FGR promotes phosphorylation at Tyr-397 and Tyr-576. FER promotes phosphorylation at Tyr-577, Tyr-861 and Tyr-928, even when cells are not adherent. Tyr-397, Tyr-576 and Ser-722 are phosphorylated only when cells are adherent. Phosphorylation at Tyr-397 is important for interaction with BMX, PIK3R1 and SHC1. Phosphorylation at Tyr-928 is important for interaction with GRB2. Dephosphorylated by PTPN11; PTPN11 is recruited to PTK2 via EPHA2 (tyrosine phosphorylated). Microtubule-induced dephosphorylation at Tyr-397 is crucial for the induction of focal adhesion disassembly; this dephosphorylation could be catalyzed by PTPN11 and regulated by ZFYVE21. Phosphorylation on tyrosine residues is enhanced by NTN1. Sumoylated; this enhances autophosphorylation.

The protein resides in the cell junction. The protein localises to the focal adhesion. It is found in the cell membrane. Its subcellular location is the cytoplasm. It localises to the perinuclear region. The protein resides in the cell cortex. The protein localises to the cytoskeleton. It is found in the microtubule organizing center. Its subcellular location is the centrosome. It localises to the nucleus. The protein resides in the cilium basal body. The enzyme catalyses L-tyrosyl-[protein] + ATP = O-phospho-L-tyrosyl-[protein] + ADP + H(+). Its activity is regulated as follows. Subject to autoinhibition, mediated by interactions between the FERM domain and the kinase domain. Activated by autophosphorylation at Tyr-397. This promotes interaction with SRC and phosphorylation at Tyr-576 and Tyr-577 in the kinase activation loop by SRC. Phosphorylation at Tyr-397, Tyr-576 and Tyr-577 is required for maximal kinase activity. Functionally, non-receptor protein-tyrosine kinase that plays an essential role in regulating cell migration, adhesion, spreading, reorganization of the actin cytoskeleton, formation and disassembly of focal adhesions and cell protrusions, cell cycle progression, cell proliferation and apoptosis. Required for early embryonic development and placenta development. Required for embryonic angiogenesis, normal cardiomyocyte migration and proliferation, and normal heart development. Regulates axon growth and neuronal cell migration, axon branching and synapse formation; required for normal development of the nervous system. Plays a role in osteogenesis and differentiation of osteoblasts. Functions in integrin signal transduction, but also in signaling downstream of numerous growth factor receptors, G-protein coupled receptors (GPCR), EPHA2, netrin receptors and LDL receptors. Forms multisubunit signaling complexes with SRC and SRC family members upon activation; this leads to the phosphorylation of additional tyrosine residues, creating binding sites for scaffold proteins, effectors and substrates. Regulates numerous signaling pathways. Promotes activation of phosphatidylinositol 3-kinase and the AKT1 signaling cascade. Promotes activation of MAPK1/ERK2, MAPK3/ERK1 and the MAP kinase signaling cascade. Promotes localized and transient activation of guanine nucleotide exchange factors (GEFs) and GTPase-activating proteins (GAPs), and thereby modulates the activity of Rho family GTPases. Signaling via CAS family members mediates activation of RAC1. Phosphorylates NEDD9 following integrin stimulation. Recruits the ubiquitin ligase MDM2 to P53/TP53 in the nucleus, and thereby regulates P53/TP53 activity, P53/TP53 ubiquitination and proteasomal degradation. Phosphorylates SRC; this increases SRC kinase activity. Phosphorylates ACTN1, ARHGEF7, GRB7, RET and WASL. Promotes phosphorylation of PXN and STAT1; most likely PXN and STAT1 are phosphorylated by a SRC family kinase that is recruited to autophosphorylated PTK2/FAK1, rather than by PTK2/FAK1 itself. Promotes phosphorylation of BCAR1; GIT2 and SHC1; this requires both SRC and PTK2/FAK1. Promotes phosphorylation of BMX and PIK3R1. Its function is as follows. Does not contain a kinase domain and inhibits PTK2/FAK1 phosphorylation and signaling. Its enhanced expression can attenuate the nuclear accumulation of LPXN and limit its ability to enhance serum response factor (SRF)-dependent gene transcription. This is Focal adhesion kinase 1 from Rattus norvegicus (Rat).